The primary structure comprises 877 residues: Leucine--tRNA ligase (877 aa).

The 'HIGH' region motif lies at 43-53 (PYPSGRIHMGH). The 'KMSKS' region signature appears at 628–632 (KMSKS). ATP is bound at residue lysine 631.

This sequence belongs to the class-I aminoacyl-tRNA synthetase family.

Its subcellular location is the cytoplasm. The enzyme catalyses tRNA(Leu) + L-leucine + ATP = L-leucyl-tRNA(Leu) + AMP + diphosphate. The protein is Leucine--tRNA ligase of Brucella abortus biovar 1 (strain 9-941).